The following is a 237-amino-acid chain: MNGKLYALSTGPGAPDLITVRAARILGSLDILYAPAGRKGGDSLALSIVRDYLGEQTEVRCCHFPMSADGAEKEAVWNEVAAALTAEVEAGKQVGFITLGDAMLFSTWIFLLQRIGCPEWLEIVPGVTSFAAIAARAKMPLAIERQSLAVISCTAPEAEIAQALQQHDSLVLMKVYGRFARIKALLAQAGLLECALMMSEATLPGEQCWRHLHEVNDDRPLPYFSTILVNKQWEYAE.

It belongs to the precorrin methyltransferase family. In terms of assembly, homodimer.

It carries out the reaction Co-precorrin-2 + S-adenosyl-L-methionine = Co-precorrin-3 + S-adenosyl-L-homocysteine + H(+). Its pathway is cofactor biosynthesis; adenosylcobalamin biosynthesis; cob(II)yrinate a,c-diamide from sirohydrochlorin (anaerobic route): step 2/10. Its function is as follows. Methylates cobalt-precorrin-2 at the C-20 position to produce cobalt-precorrin-3A in the anaerobic cobalamin biosynthesis pathway. The sequence is that of Cobalt-precorrin-2 C(20)-methyltransferase (cbiL) from Salmonella typhimurium (strain LT2 / SGSC1412 / ATCC 700720).